We begin with the raw amino-acid sequence, 483 residues long: uncharacterized protein (483 aa).

The 61-residue stretch at 11-71 (RYRKGDIIEL…SRYLEARAIE (61 aa)) folds into the TRAM domain. 4 residues coordinate [4Fe-4S] cluster: Cys84, Cys90, Cys93, and Cys187. S-adenosyl-L-methionine contacts are provided by Gln312, Tyr341, Glu362, and Asp412. Cys439 functions as the Nucleophile in the catalytic mechanism.

It belongs to the class I-like SAM-binding methyltransferase superfamily. RNA M5U methyltransferase family.

This is an uncharacterized protein from Chlorobaculum tepidum (strain ATCC 49652 / DSM 12025 / NBRC 103806 / TLS) (Chlorobium tepidum).